Reading from the N-terminus, the 328-residue chain is Beta-ketoacyl-[acyl-carrier-protein] synthase III (328 aa).

Catalysis depends on residues Cys-122 and His-255. The segment at 256 to 260 (QANIR) is ACP-binding. Asn-285 is an active-site residue.

This sequence belongs to the thiolase-like superfamily. FabH family. As to quaternary structure, homodimer.

It localises to the cytoplasm. It carries out the reaction malonyl-[ACP] + acetyl-CoA + H(+) = 3-oxobutanoyl-[ACP] + CO2 + CoA. The protein operates within lipid metabolism; fatty acid biosynthesis. Catalyzes the condensation reaction of fatty acid synthesis by the addition to an acyl acceptor of two carbons from malonyl-ACP. Catalyzes the first condensation reaction which initiates fatty acid synthesis and may therefore play a role in governing the total rate of fatty acid production. Possesses both acetoacetyl-ACP synthase and acetyl transacylase activities. Its substrate specificity determines the biosynthesis of branched-chain and/or straight-chain of fatty acids. The polypeptide is Beta-ketoacyl-[acyl-carrier-protein] synthase III (Polynucleobacter asymbioticus (strain DSM 18221 / CIP 109841 / QLW-P1DMWA-1) (Polynucleobacter necessarius subsp. asymbioticus)).